The sequence spans 379 residues: Alcohol dehydrogenase class-3 (379 aa).

A2 bears the N-acetylalanine mark. Residue C47 coordinates Zn(2+). H48 lines the NAD(+) pocket. Positions 49 and 69 each coordinate an alcohol. Residues H69, E70, C99, C102, C105, C113, and C177 each coordinate Zn(2+). NAD(+)-binding positions include 202 to 207 (GLGTVG), D226, K231, I272, 295 to 297 (VGV), 320 to 322 (TAF), and R372.

This sequence belongs to the zinc-containing alcohol dehydrogenase family. Class-III subfamily. Homodimer. It depends on Zn(2+) as a cofactor. Ubiquitous.

The protein localises to the cytoplasm. It carries out the reaction a primary alcohol + NAD(+) = an aldehyde + NADH + H(+). The catalysed reaction is a secondary alcohol + NAD(+) = a ketone + NADH + H(+). It catalyses the reaction S-(hydroxymethyl)glutathione + NADP(+) = S-formylglutathione + NADPH + H(+). The enzyme catalyses S-(hydroxymethyl)glutathione + NAD(+) = S-formylglutathione + NADH + H(+). It carries out the reaction S-nitrosoglutathione + NADH + H(+) = S-(hydroxysulfenamide)glutathione + NAD(+). Repressed by thiol-modifying agents N-ethylmaleimide (NEM) and 5,5-dithio-bis-(2-nitrobenzoic acid) (DTNB), as well as by methyl methanethiosulfonate (MMTS) in a dose-dependent manner. Inhibited by hydrogen peroxide H(2)O(2). Functionally, alcohol dehydrogenase catalyzing the reduction of nitrosoglutathione. Can also use long-chain alcohols including cinnamyl alcohol and geraniol, and, to a lower extent, octanol. Plays a central role in formaldehyde detoxification. Not able to use ethanol (EtOH) as substrate. The polypeptide is Alcohol dehydrogenase class-3 (Arabidopsis thaliana (Mouse-ear cress)).